A 135-amino-acid chain; its full sequence is ATP synthase epsilon chain (135 aa).

Belongs to the ATPase epsilon chain family. F-type ATPases have 2 components, CF(1) - the catalytic core - and CF(0) - the membrane proton channel. CF(1) has five subunits: alpha(3), beta(3), gamma(1), delta(1), epsilon(1). CF(0) has three main subunits: a, b and c.

The protein resides in the cell inner membrane. Produces ATP from ADP in the presence of a proton gradient across the membrane. The polypeptide is ATP synthase epsilon chain (Hyphomonas neptunium (strain ATCC 15444)).